The following is a 396-amino-acid chain: Argininosuccinate synthase (396 aa).

ATP contacts are provided by residues 10–18 and Ala-37; that span reads AYSGGLDTS. L-citrulline-binding residues include Tyr-88 and Ser-93. Gly-118 lines the ATP pocket. The L-aspartate site is built by Thr-120, Asn-124, and Asp-125. Asn-124 contributes to the L-citrulline binding site. Residues Arg-128, Ser-176, Ser-185, Glu-261, and Tyr-273 each contribute to the L-citrulline site.

Belongs to the argininosuccinate synthase family. Type 1 subfamily. In terms of assembly, homotetramer.

The protein resides in the cytoplasm. It carries out the reaction L-citrulline + L-aspartate + ATP = 2-(N(omega)-L-arginino)succinate + AMP + diphosphate + H(+). Its pathway is amino-acid biosynthesis; L-arginine biosynthesis; L-arginine from L-ornithine and carbamoyl phosphate: step 2/3. The protein is Argininosuccinate synthase of Nitratidesulfovibrio vulgaris (strain ATCC 29579 / DSM 644 / CCUG 34227 / NCIMB 8303 / VKM B-1760 / Hildenborough) (Desulfovibrio vulgaris).